Consider the following 778-residue polypeptide: Zinc finger protein 749 (778 aa).

Residues 8 to 101 (MVFEDVAIYF…ILKDILHLAE (94 aa)) form the KRAB domain. The C2H2-type 1; degenerate zinc finger occupies 152–174 (FTCTQGGKDFTASSDLLQQQVLN). Residues 196–218 (FNSSQGGKDFCHQHGLFEHQKTH) form a C2H2-type 2; degenerate zinc finger. Residues 224–246 (YEFSECGELFRYNSNLIKYQQNH) form a C2H2-type 3; degenerate zinc finger. Residues 252–274 (YEGTEYGKTFIRKSNLVQHQKIH) form a C2H2-type 4; degenerate zinc finger. C2H2-type zinc fingers lie at residues 298 to 320 (YECT…QKTH), 326 to 348 (YECN…QKVH), 354 to 376 (YECS…QRVH), 382 to 404 (FECS…QRVH), 410 to 432 (YKCS…LKIH), and 438 to 460 (YECT…QKIH). The residue at position 466 (Lys-466) is an N6-acetyllysine. 2 consecutive C2H2-type zinc fingers follow at residues 483 to 505 (YTCS…QKIH) and 511 to 533 (YECT…EKIH). Lys-539 bears the N6-acetyllysine mark. The segment at 556-578 (YVCSECGKAFLTQAHLDGHQKIQ) adopts a C2H2-type 13; degenerate zinc-finger fold. 3 C2H2-type zinc fingers span residues 584 to 606 (YECN…QRIH), 612 to 634 (YKCS…QKVH), and 640 to 662 (YECS…QRVH). The segment at 668–690 (YECSNCGKFLRYRSTFIKHHKVC) adopts a C2H2-type 17; atypical zinc-finger fold. A C2H2-type 18 zinc finger spans residues 696 to 718 (HECSKCRELFRTKSSLIIHQQSH). The C2H2-type 19; degenerate zinc-finger motif lies at 751-773 (YECGESSKVFKYNSSLIKHQIIH). Residues Lys-761 and Lys-768 each participate in a glycyl lysine isopeptide (Lys-Gly) (interchain with G-Cter in SUMO2) cross-link.

Belongs to the krueppel C2H2-type zinc-finger protein family.

It localises to the nucleus. Its function is as follows. May be involved in transcriptional regulation. This chain is Zinc finger protein 749 (ZNF749), found in Homo sapiens (Human).